A 446-amino-acid chain; its full sequence is Trigger factor (446 aa).

One can recognise a PPIase FKBP-type domain in the interval 163 to 248 (GDRLVIDFEG…VKEIKKKNLL (86 aa)).

The protein belongs to the FKBP-type PPIase family. Tig subfamily.

It localises to the cytoplasm. It catalyses the reaction [protein]-peptidylproline (omega=180) = [protein]-peptidylproline (omega=0). Involved in protein export. Acts as a chaperone by maintaining the newly synthesized protein in an open conformation. Functions as a peptidyl-prolyl cis-trans isomerase. The protein is Trigger factor of Natranaerobius thermophilus (strain ATCC BAA-1301 / DSM 18059 / JW/NM-WN-LF).